The following is a 162-amino-acid chain: Cytochrome c-type biogenesis protein CcmE (162 aa).

Residues 1 to 13 (MSFWPQSRKARRR) lie on the Cytoplasmic side of the membrane. A helical; Signal-anchor for type II membrane protein transmembrane segment spans residues 14-34 (LTILLAIAPVLALAVGLALYG). The Periplasmic segment spans residues 35 to 162 (LRDSISLFYT…DAPAYGSQKP (128 aa)). The heme site is built by histidine 128 and tyrosine 132. Residues 140 to 151 (ALKEQGEWRGEG) show a composition bias toward basic and acidic residues. The disordered stretch occupies residues 140 to 162 (ALKEQGEWRGEGADAPAYGSQKP).

Belongs to the CcmE/CycJ family.

The protein localises to the cell inner membrane. Its function is as follows. Heme chaperone required for the biogenesis of c-type cytochromes. Transiently binds heme delivered by CcmC and transfers the heme to apo-cytochromes in a process facilitated by CcmF and CcmH. The polypeptide is Cytochrome c-type biogenesis protein CcmE (Caulobacter vibrioides (strain ATCC 19089 / CIP 103742 / CB 15) (Caulobacter crescentus)).